Here is a 107-residue protein sequence, read N- to C-terminus: uncharacterized protein (107 aa).

Transmembrane regions (helical) follow at residues 16–36, 47–67, and 85–105; these read VIPC…SESL, IISL…HSLV, and LIVL…TSLI.

The protein resides in the membrane. This is an uncharacterized protein from Saccharomyces cerevisiae (strain ATCC 204508 / S288c) (Baker's yeast).